Consider the following 68-residue polypeptide: Peptide Hp1412 (68 aa).

The N-terminal stretch at 1–23 (MKTHFAIFLITLFLFQMFSQSDA) is a signal peptide. Residue C36 is modified to Cysteine amide. The propeptide occupies 40–68 (GLSDLYDLDEMFDGEISQADIDFLKELMR).

It belongs to the non-disulfide-bridged peptide (NDBP) superfamily. Short antimicrobial peptide (group 4) family. In terms of tissue distribution, expressed by the venom gland.

The protein localises to the secreted. It is found in the target cell membrane. Its function is as follows. Amphipathic peptide with antimicrobial activity. This is Peptide Hp1412 from Heterometrus petersii (Asian forest scorpion).